Here is a 387-residue protein sequence, read N- to C-terminus: 3-ketoacyl-CoA thiolase (387 aa).

Residue Cys-91 is the Acyl-thioester intermediate of the active site. Residues His-343 and Cys-373 each act as proton acceptor in the active site.

It belongs to the thiolase-like superfamily. Thiolase family. In terms of assembly, heterotetramer of two alpha chains (FadB) and two beta chains (FadA).

It is found in the cytoplasm. The catalysed reaction is an acyl-CoA + acetyl-CoA = a 3-oxoacyl-CoA + CoA. It participates in lipid metabolism; fatty acid beta-oxidation. Functionally, catalyzes the final step of fatty acid oxidation in which acetyl-CoA is released and the CoA ester of a fatty acid two carbons shorter is formed. The sequence is that of 3-ketoacyl-CoA thiolase from Vibrio cholerae serotype O1 (strain ATCC 39315 / El Tor Inaba N16961).